Consider the following 122-residue polypeptide: Large ribosomal subunit protein uL14 (122 aa).

This sequence belongs to the universal ribosomal protein uL14 family. In terms of assembly, part of the 50S ribosomal subunit. Forms a cluster with proteins L3 and L19. In the 70S ribosome, L14 and L19 interact and together make contacts with the 16S rRNA in bridges B5 and B8.

Functionally, binds to 23S rRNA. Forms part of two intersubunit bridges in the 70S ribosome. The polypeptide is Large ribosomal subunit protein uL14 (Rippkaea orientalis (strain PCC 8801 / RF-1) (Cyanothece sp. (strain PCC 8801))).